The chain runs to 404 residues: Probable homogentisate phytyltransferase 1, chloroplastic (404 aa).

The N-terminal 77 residues, 1-77 (MDSLRLRPSL…SHHRIPHRPT (77 aa)), are a transit peptide targeting the chloroplast. The segment at 68–96 (SHHRIPHRPTSSSADASGQPLQSSAEAHD) is disordered. A compositionally biased stretch (polar residues) spans 76-92 (PTSSSADASGQPLQSSA). 9 helical membrane-spanning segments follow: residues 119–139 (TVIGTALSIVSVSLLAVENLS), 144–164 (LFLTGLLEAVVAALFMNIYIV), 184–204 (LASGEYSPATGVALVSAFAAM), 216–238 (PLFLALFISFILGTAYSINLPFL), 245–265 (VVAALCILAVRAVIVQLAFFL), 282–302 (LIFATAFMTFFSVVIALFKDI), 325–345 (VFWICVGLLEMAYCVAILMGA), 348–368 (ACLWSKYATVVGHAILAAILW), and 382–402 (ITSFYMFIWKLFYAEYLLIPL).

The protein belongs to the UbiA prenyltransferase family.

Its subcellular location is the plastid. The protein localises to the chloroplast thylakoid membrane. It carries out the reaction phytyl diphosphate + homogentisate + H(+) = 2-methyl-6-phytyl-1,4-benzene-1,4-diol + CO2 + diphosphate. The protein operates within cofactor biosynthesis; tocopherol biosynthesis. Its function is as follows. Involved in the synthesis of tocopherol (vitamin E). Catalyzes the condensation of homogentisate and phytyl diphosphate to form dimethylphytylhydroquinone. The chain is Probable homogentisate phytyltransferase 1, chloroplastic (HPT1) from Oryza sativa subsp. japonica (Rice).